A 429-amino-acid polypeptide reads, in one-letter code: Glutamate-1-semialdehyde 2,1-aminomutase 2 (429 aa).

Residue Lys268 is modified to N6-(pyridoxal phosphate)lysine.

It belongs to the class-III pyridoxal-phosphate-dependent aminotransferase family. HemL subfamily. As to quaternary structure, homodimer. The cofactor is pyridoxal 5'-phosphate.

It is found in the cytoplasm. It carries out the reaction (S)-4-amino-5-oxopentanoate = 5-aminolevulinate. It functions in the pathway porphyrin-containing compound metabolism; protoporphyrin-IX biosynthesis; 5-aminolevulinate from L-glutamyl-tRNA(Glu): step 2/2. This chain is Glutamate-1-semialdehyde 2,1-aminomutase 2, found in Staphylococcus aureus (strain bovine RF122 / ET3-1).